Here is a 134-residue protein sequence, read N- to C-terminus: Small ribosomal subunit protein bS6 (134 aa).

A compositionally biased stretch (basic and acidic residues) spans 113–122; it reads NKDIKEKEQP. The segment at 113-134 is disordered; the sequence is NKDIKEKEQPSESNVDADLKVN.

Belongs to the bacterial ribosomal protein bS6 family.

Binds together with bS18 to 16S ribosomal RNA. The protein is Small ribosomal subunit protein bS6 of Borrelia recurrentis (strain A1).